We begin with the raw amino-acid sequence, 274 residues long: MLSVAARSGPFAPVLSAKSRGVXXXXXXXXXXXXXXTPEPPVLDPKRPILSRESLSGQAARRPLVASVGLNVPASVRYSHTDIKVPDFSDYRRSEVLDKTKSSRESSDARKVFSYMVTATTAVGVTYAAKSIVTQFISSMSASADVLAMSKIEIKLSDIPEGKNMAFKWRGKPLFVRHRTQKEIEQEAAVELSQLRDPQHDLDRVKKPEWMILIGVCTHLGCVPIANAGDFGGYYCPCHGSHYDASGRIRKGPAPLNLEVPTYEFLSDDMVVVG.

The segment at 29–49 (XXXXXXXXTPEPPVLDPKRPI) is disordered. Residues 79–103 (SHTDIKVPDFSDYRRSEVLDKTKSS) are Mitochondrial matrix-facing. Residues 104-140 (RESSDARKVFSYMVTATTAVGVTYAAKSIVTQFISSM) traverse the membrane as a helical segment. At 141–274 (SASADVLAMS…FLSDDMVVVG (134 aa)) the chain is on the mitochondrial intermembrane side. Positions 187–272 (EAAVELSQLR…YEFLSDDMVV (86 aa)) constitute a Rieske domain. The [2Fe-2S] cluster site is built by C217, H219, C236, H239, and S241. A disulfide bridge connects residues C222 and C238.

The protein belongs to the Rieske iron-sulfur protein family. Component of the ubiquinol-cytochrome c oxidoreductase (cytochrome b-c1 complex, complex III, CIII), a multisubunit enzyme composed of 11 subunits. The complex is composed of 3 respiratory subunits cytochrome b, cytochrome c1 and Rieske protein UQCRFS1, 2 core protein subunits UQCRC1/QCR1 and UQCRC2/QCR2, and 6 low-molecular weight protein subunits UQCRH/QCR6, UQCRB/QCR7, UQCRQ/QCR8, UQCR10/QCR9, UQCR11/QCR10 and subunit 9, the cleavage product of Rieske protein UQCRFS1. The complex exists as an obligatory dimer and forms supercomplexes (SCs) in the inner mitochondrial membrane with NADH-ubiquinone oxidoreductase (complex I, CI) and cytochrome c oxidase (complex IV, CIV), resulting in different assemblies (supercomplex SCI(1)III(2)IV(1) and megacomplex MCI(2)III(2)IV(2)). Incorporation of the Rieske protein UQCRFS1 is the penultimate step in complex III assembly. Interacts with TTC19, which is involved in the clearance of UQCRFS1 fragments. As to quaternary structure, component of the ubiquinol-cytochrome c oxidoreductase (cytochrome b-c1 complex, complex III, CIII). Subunit 9 corresponds to the mitochondrial targeting sequence (MTS) of Rieske protein UQCRFS1. It is retained after processing and incorporated inside complex III, where it remains bound to the complex and localizes between the 2 core subunits UQCRC1/QCR1 and UQCRC2/QCR2. [2Fe-2S] cluster is required as a cofactor. Proteolytic processing is necessary for the correct insertion of UQCRFS1 in the complex III dimer. Several fragments are generated during UQCRFS1 insertion, most probably due to the endogenous matrix-processing peptidase (MPP) activity of the 2 core protein subunits UQCRC1/QCR1 and UQCRC2/QCR2, which are homologous to the 2 mitochondrial-processing peptidase (MPP) subunits beta-MPP and alpha-MPP respectively. The action of the protease is also necessary for the clearance of the UQCRFS1 fragments.

The protein localises to the mitochondrion inner membrane. The catalysed reaction is a quinol + 2 Fe(III)-[cytochrome c](out) = a quinone + 2 Fe(II)-[cytochrome c](out) + 2 H(+)(out). In terms of biological role, component of the ubiquinol-cytochrome c oxidoreductase, a multisubunit transmembrane complex that is part of the mitochondrial electron transport chain which drives oxidative phosphorylation. The respiratory chain contains 3 multisubunit complexes succinate dehydrogenase (complex II, CII), ubiquinol-cytochrome c oxidoreductase (cytochrome b-c1 complex, complex III, CIII) and cytochrome c oxidase (complex IV, CIV), that cooperate to transfer electrons derived from NADH and succinate to molecular oxygen, creating an electrochemical gradient over the inner membrane that drives transmembrane transport and the ATP synthase. The cytochrome b-c1 complex catalyzes electron transfer from ubiquinol to cytochrome c, linking this redox reaction to translocation of protons across the mitochondrial inner membrane, with protons being carried across the membrane as hydrogens on the quinol. In the process called Q cycle, 2 protons are consumed from the matrix, 4 protons are released into the intermembrane space and 2 electrons are passed to cytochrome c. The Rieske protein is a catalytic core subunit containing a [2Fe-2S] iron-sulfur cluster. It cycles between 2 conformational states during catalysis to transfer electrons from the quinol bound in the Q(0) site in cytochrome b to cytochrome c1. Incorporation of UQCRFS1 is the penultimate step in complex III assembly. Its function is as follows. Component of the ubiquinol-cytochrome c oxidoreductase (cytochrome b-c1 complex, complex III, CIII). UQCRFS1 undergoes proteolytic processing once it is incorporated in the complex III dimer. One of the fragments, called subunit 9, corresponds to its mitochondrial targeting sequence (MTS). The proteolytic processing is necessary for the correct insertion of UQCRFS1 in the complex III dimer, but the persistence of UQCRFS1-derived fragments may prevent newly imported UQCRFS1 to be processed and assembled into complex III and is detrimental for the complex III structure and function. In Saimiri sciureus (Common squirrel monkey), this protein is Cytochrome b-c1 complex subunit Rieske, mitochondrial (UQCRFS1).